The following is an 864-amino-acid chain: Sine oculis-binding protein homolog (864 aa).

Residues Met1–Lys14 show a composition bias toward basic and acidic residues. Residues Met1–Arg25 are disordered. 2 FCS-type zinc fingers span residues Asp142 to Ala180 and Phe216 to Asn256. 3 disordered regions span residues Leu304–Ser360, Arg413–Pro484, and Lys550–Gly616. 2 stretches are compositionally biased toward low complexity: residues Pro314–Ser335 and His417–Gly433. The segment covering Ile460–Pro484 has biased composition (pro residues). Composition is skewed to low complexity over residues Ser565–Leu582 and Gly590–Gly603. Positions Val618 to Thr622 match the SUMO interaction motif 1 (SIM); mediates the binding to polysumoylated substrates motif. Position 627 is a phosphoserine (Ser627). The SUMO interaction motif 2 (SIM); mediates the binding to polysumoylated substrates motif lies at Val648–Thr652. Lys672 is covalently cross-linked (Glycyl lysine isopeptide (Lys-Gly) (interchain with G-Cter in SUMO2)). Ser694 carries the post-translational modification Phosphoserine. The segment at Ala725–Ser750 is disordered. Pro residues predominate over residues Glu733–Pro745.

Belongs to the SOBP family. In terms of assembly, interacts (via SIM domains) with SUMO1 and SUMO2.

Implicated in development of the cochlea. This is Sine oculis-binding protein homolog from Rattus norvegicus (Rat).